Here is a 58-residue protein sequence, read N- to C-terminus: Small ribosomal subunit protein bS21 (58 aa).

Basic and acidic residues predominate over residues isoleucine 32–serine 42. A disordered region spans residues isoleucine 32 to lysine 58. Over residues valine 43–lysine 58 the composition is skewed to basic residues.

The protein belongs to the bacterial ribosomal protein bS21 family.

In Lachnoclostridium phytofermentans (strain ATCC 700394 / DSM 18823 / ISDg) (Clostridium phytofermentans), this protein is Small ribosomal subunit protein bS21.